Reading from the N-terminus, the 1891-residue chain is Protein TIC 214 (1891 aa).

The next 6 membrane-spanning stretches (helical) occupy residues Ile-18 to Gly-38, Phe-64 to Leu-84, Pro-87 to His-107, Leu-124 to Leu-144, Val-172 to Ile-192, and Ile-221 to Ile-241. 3 disordered regions span residues Glu-248 to Asp-300, Glu-788 to Arg-807, and Lys-1580 to Pro-1607. Positions Val-256 to Thr-268 are enriched in acidic residues. A compositionally biased stretch (basic and acidic residues) spans Arg-1582 to Asn-1601.

The protein belongs to the TIC214 family. In terms of assembly, part of the Tic complex.

Its subcellular location is the plastid. It localises to the chloroplast inner membrane. Functionally, involved in protein precursor import into chloroplasts. May be part of an intermediate translocation complex acting as a protein-conducting channel at the inner envelope. The protein is Protein TIC 214 of Solanum lycopersicum (Tomato).